The sequence spans 317 residues: MGEVQREKVAVIIGPTAVGKTKLSIDLAKALNGEIISGDSMQIYRTMDIGTAKVTKEEMDGIPHYMVDIKNPEESFSVAEFQERVRKHIREITERGKLPIIVGGTGLYIQSVLFDYQFTDDAGDVIYREHMEKLALERGVEYVHKKLQEVDPESAERIHANNVRRVIRALEIFHTTGEKMSDQLEKQENELLYDVSLIGLTMDREMLYDRINLRVDIMMDQGLLEEVEGLYNRGIRDCQSIQAIGYKEIYDYFEDRVSLEEAVSQLKTNSRRYAKRQLTWFRNKMDVTWFDVTDGEKTSEILRYIEGKLQLKSNNSK.

Residue 14–21 coordinates ATP; that stretch reads GPTAVGKT. A substrate-binding site is contributed by 16–21; the sequence is TAVGKT. The interaction with substrate tRNA stretch occupies residues 39–42; sequence DSMQ.

This sequence belongs to the IPP transferase family. In terms of assembly, monomer. It depends on Mg(2+) as a cofactor.

It carries out the reaction adenosine(37) in tRNA + dimethylallyl diphosphate = N(6)-dimethylallyladenosine(37) in tRNA + diphosphate. Functionally, catalyzes the transfer of a dimethylallyl group onto the adenine at position 37 in tRNAs that read codons beginning with uridine, leading to the formation of N6-(dimethylallyl)adenosine (i(6)A). The chain is tRNA dimethylallyltransferase from Bacillus cereus (strain ATCC 10987 / NRS 248).